The primary structure comprises 117 residues: Modulator protein MzrA (117 aa).

Residues 1–9 are Cytoplasmic-facing; sequence MNSPGLRKP. The chain crosses the membrane as a helical span at residues 10–29; sequence TIWRPLLLLFPLLALLLSMS. At 30 to 117 the chain is on the periplasmic side; it reads SPRLPDEVML…THGTIRVARS (88 aa).

The protein belongs to the MzrA family. In terms of assembly, interacts with EnvZ.

It is found in the cell inner membrane. Modulates the activity of the EnvZ/OmpR two-component regulatory system, probably by directly modulating EnvZ enzymatic activity and increasing stability of phosphorylated OmpR. The protein is Modulator protein MzrA of Dickeya zeae (strain Ech586) (Dickeya dadantii (strain Ech586)).